A 227-amino-acid polypeptide reads, in one-letter code: Neuromodulin (227 aa).

Residues 1–227 (MLCCMRRTKQ…EDPEADQEHA (227 aa)) are disordered. 2 S-palmitoyl cysteine lipidation sites follow: Cys3 and Cys4. The span at 9-32 (KQVEKNDEDQKIEQDGVKPEDKAH) shows a compositional bias: basic and acidic residues. Residues 31–60 (AHKAATKIQASFRGHITRKKLKGEKKGDAP) enclose the IQ domain. Ser41 bears the Phosphoserine; by PHK mark. Residues 54 to 84 (EKKGDAPAAEAEAKEKDDAPVADGVEKKEGD) show a composition bias toward basic and acidic residues. Positions 85–97 (GSATTDAAPATSP) are enriched in low complexity. 2 positions are modified to phosphoserine: Ser86 and Ser96. A compositionally biased stretch (basic and acidic residues) spans 98–127 (KAEEPSKAGDAPSEEKKGEGDAAPSEEKAG). The segment covering 128-139 (SAETESAAKATT) has biased composition (low complexity). Residue Thr138 is modified to Phosphothreonine. Ser142, Ser144, and Ser145 each carry phosphoserine. Basic and acidic residues predominate over residues 146–158 (KAEDGPAKEEPKQ). Low complexity predominate over residues 159 to 193 (ADVPAAVTDAAATTPAAEDAATKAAQPPTETAESS). Thr172 bears the Phosphothreonine mark. Phosphoserine; by CK2 is present on residues Ser192 and Ser193. Residues 202-215 (VDEAKPKESARQDE) show a composition bias toward basic and acidic residues. Acidic residues predominate over residues 216–227 (GKEDPEADQEHA).

Belongs to the neuromodulin family. In terms of assembly, identified in a complex containing FGFR4, NCAM1, CDH2, PLCG1, FRS2, SRC, SHC1, GAP43 and CTTN. Interacts (via IQ domain) with calmodulin. Binds calmodulin with a greater affinity in the absence of Ca(2+) than in its presence. In terms of processing, phosphorylated. Phosphorylation of this protein by a protein kinase C is specifically correlated with certain forms of synaptic plasticity. Palmitoylated by ZDHHC3. Palmitoylation is regulated by ARF6 and is essential for plasma membrane association and axonal and dendritic filopodia induction. Deacylated by LYPLA2. As to expression, expressed in the hippocampus (at protein level). Expressed in the dorsal root ganglion and the spinal cord (at protein level).

The protein localises to the cell membrane. The protein resides in the cell projection. Its subcellular location is the growth cone membrane. It localises to the synapse. It is found in the filopodium membrane. The protein localises to the perikaryon. The protein resides in the dendrite. Its subcellular location is the axon. It localises to the cytoplasm. This protein is associated with nerve growth. It is a major component of the motile 'growth cones' that form the tips of elongating axons. Plays a role in axonal and dendritic filopodia induction. This Mus musculus (Mouse) protein is Neuromodulin (Gap43).